Reading from the N-terminus, the 171-residue chain is Co-chaperone protein HscB homolog (171 aa).

The 73-residue stretch at 2–74 (NHFELFGLPP…ISRAEYLLSQ (73 aa)) folds into the J domain.

Belongs to the HscB family. In terms of assembly, interacts with HscA and stimulates its ATPase activity.

Co-chaperone involved in the maturation of iron-sulfur cluster-containing proteins. Seems to help targeting proteins to be folded toward HscA. The sequence is that of Co-chaperone protein HscB homolog from Vibrio vulnificus (strain CMCP6).